A 378-amino-acid chain; its full sequence is Alcohol dehydrogenase class-3 (378 aa).

Ala1 carries the post-translational modification N-acetylalanine. A Zn(2+)-binding site is contributed by Cys46. His47 is an NAD(+) binding site. Residues Thr48 and His68 each contribute to the an alcohol site. Residues His68, Glu69, Cys98, Cys101, Cys104, Cys112, and Cys176 each contribute to the Zn(2+) site. Residues 201 to 206 (GLGTVG), Asp225, Lys230, 294 to 296 (VGV), 319 to 321 (TAF), and Arg371 contribute to the NAD(+) site.

The protein belongs to the zinc-containing alcohol dehydrogenase family. Class-III subfamily. As to quaternary structure, homodimer. Zn(2+) serves as cofactor.

It is found in the cytoplasm. It catalyses the reaction a primary alcohol + NAD(+) = an aldehyde + NADH + H(+). The catalysed reaction is a secondary alcohol + NAD(+) = a ketone + NADH + H(+). It carries out the reaction S-(hydroxymethyl)glutathione + NADP(+) = S-formylglutathione + NADPH + H(+). The enzyme catalyses S-(hydroxymethyl)glutathione + NAD(+) = S-formylglutathione + NADH + H(+). Class-III ADH is remarkably ineffective in oxidizing ethanol, but it readily catalyzes the oxidation of long-chain primary alcohols and the oxidation of S-(hydroxymethyl) glutathione. The sequence is that of Alcohol dehydrogenase class-3 from Pisum sativum (Garden pea).